We begin with the raw amino-acid sequence, 60 residues long: Waprin-Lio1 (60 aa).

Positions 1–8 (MLLGTTSA) are cleaved as a signal peptide. Positions 9–59 (QVVRPGSCPNVDVPIPPLGLCRTTCQTDANCQEGRKCCKNGCGFMTCETAR) constitute a WAP domain. 4 disulfides stabilise this stretch: Cys-16–Cys-46, Cys-29–Cys-50, Cys-33–Cys-45, and Cys-39–Cys-55.

The protein belongs to the venom waprin family. In terms of tissue distribution, expressed by the venom gland.

It localises to the secreted. Its function is as follows. Damages membranes of susceptible bacteria. Has no hemolytic activity. Not toxic to mice. Does not inhibit the proteinases elastase and cathepsin G. In Erythrolamprus poecilogyrus (Water snake), this protein is Waprin-Lio1.